The sequence spans 377 residues: Actin-related protein T2 (377 aa).

The protein belongs to the actin family.

It is found in the cytoplasm. Its subcellular location is the cytoskeleton. The protein is Actin-related protein T2 (Actrt2) of Mus musculus (Mouse).